Here is a 167-residue protein sequence, read N- to C-terminus: Leptin (167 aa).

Positions 1–21 (MRCGPLCRFLWLWPYLSYIEA) are cleaved as a signal peptide. C117 and C167 are disulfide-bonded.

The protein belongs to the leptin family.

The protein localises to the secreted. Key player in the regulation of energy balance and body weight control. Once released into the circulation, has central and peripheral effects by binding LEPR, found in many tissues, which results in the activation of several major signaling pathways. In the hypothalamus, acts as an appetite-regulating factor that induces a decrease in food intake and an increase in energy consumption by inducing anorexinogenic factors and suppressing orexigenic neuropeptides, also regulates bone mass and secretion of hypothalamo-pituitary-adrenal hormones. In the periphery, increases basal metabolism, influences reproductive function, regulates pancreatic beta-cell function and insulin secretion, is pro-angiogenic for endothelial cell and affects innate and adaptive immunity. In the arcuate nucleus of the hypothalamus, activates by depolarization POMC neurons inducing FOS and SOCS3 expression to release anorexigenic peptides and inhibits by hyperpolarization NPY neurons inducing SOCS3 with a consequent reduction on release of orexigenic peptides. In addition to its known satiety inducing effect, has a modulatory role in nutrient absorption. In the intestine, reduces glucose absorption by enterocytes by activating PKC and leading to a sequential activation of p38, PI3K and ERK signaling pathways which exerts an inhibitory effect on glucose absorption. Acts as a growth factor on certain tissues, through the activation of different signaling pathways increases expression of genes involved in cell cycle regulation such as CCND1, via JAK2-STAT3 pathway, or VEGFA, via MAPK1/3 and PI3K-AKT1 pathways. May also play an apoptotic role via JAK2-STAT3 pathway and up-regulation of BIRC5 expression. Pro-angiogenic, has mitogenic activity on vascular endothelial cells and plays a role in matrix remodeling by regulating the expression of matrix metalloproteinases (MMPs) and tissue inhibitors of metalloproteinases (TIMPs). In innate immunity, modulates the activity and function of neutrophils by increasing chemotaxis and the secretion of oxygen radicals. Increases phagocytosis by macrophages and enhances secretion of pro-inflammatory mediators. Increases cytotoxic ability of NK cells. Plays a pro-inflammatory role, in synergy with IL1B, by inducing NOS2 which promotes the production of IL6, IL8 and Prostaglandin E2, through a signaling pathway that involves JAK2, PI3K, MAP2K1/MEK1 and MAPK14/p38. In adaptive immunity, promotes the switch of memory T-cells towards T helper-1 cell immune responses. Increases CD4(+)CD25(-) T-cell proliferation and reduces autophagy during TCR (T-cell receptor) stimulation, through MTOR signaling pathway activation and BCL2 up-regulation. This chain is Leptin (LEP), found in Ursus thibetanus (Asiatic black bear).